Reading from the N-terminus, the 280-residue chain is 4-diphosphocytidyl-2-C-methyl-D-erythritol kinase (280 aa).

Residue Lys8 is part of the active site. 91–101 (PVSAGLAGGST) is a binding site for ATP. Asp133 is an active-site residue.

This sequence belongs to the GHMP kinase family. IspE subfamily.

It catalyses the reaction 4-CDP-2-C-methyl-D-erythritol + ATP = 4-CDP-2-C-methyl-D-erythritol 2-phosphate + ADP + H(+). The protein operates within isoprenoid biosynthesis; isopentenyl diphosphate biosynthesis via DXP pathway; isopentenyl diphosphate from 1-deoxy-D-xylulose 5-phosphate: step 3/6. Catalyzes the phosphorylation of the position 2 hydroxy group of 4-diphosphocytidyl-2C-methyl-D-erythritol. In Clostridium beijerinckii (strain ATCC 51743 / NCIMB 8052) (Clostridium acetobutylicum), this protein is 4-diphosphocytidyl-2-C-methyl-D-erythritol kinase.